We begin with the raw amino-acid sequence, 86 residues long: RNA-binding protein Hfq (86 aa).

One can recognise a Sm domain in the interval 9 to 68; sequence DPYLNTLRKEKVGVSIYLVNGIKLQGTIESFDQFVILLKNTVSQMVYKHAISTVVPVRPI.

Belongs to the Hfq family. In terms of assembly, homohexamer.

Functionally, RNA chaperone that binds small regulatory RNA (sRNAs) and mRNAs to facilitate mRNA translational regulation in response to envelope stress, environmental stress and changes in metabolite concentrations. Also binds with high specificity to tRNAs. In Pseudomonas fluorescens (strain ATCC BAA-477 / NRRL B-23932 / Pf-5), this protein is RNA-binding protein Hfq.